A 393-amino-acid chain; its full sequence is MIASVLPTYTRAPLAFVRGEGSWLWTADGSRYLDLGAGIAVNALGHAAPDLVATLTEQAGKLWHVSNLYRIPEQERLADMLVAKTFADTVFFTNSGTEACELAVKMVRKHFYDKGQPERTEILTFSGAFHGRSSAAIAAAGTEKMVKGFGPLLPGFVHLPWGDLDAVKAAVTETTAAILIEPIQGEGGIRPAPEGFLRALREICDETGTLLVFDEVQCGVARTGKLFAHEWAGVTPDVMMVAKGIGGGFPLGAVLATEDAASGMIAGTHGSTYGGNPLGCAIGAKMIEIVTAPGFLDEVSRKAGFLRQWLEGLVAAHPDIFEEVRGQGLMLGLRLKLPPGDVVKAAYAQNLLTVPAADNVLRLLPALTISEDDMAEAVRRLDAAAASLETQPA.

Residues 96 to 97 (GT) and Phe-129 contribute to the pyridoxal 5'-phosphate site. N(2)-acetyl-L-ornithine is bound at residue Arg-132. 214–217 (DEVQ) is a binding site for pyridoxal 5'-phosphate. N6-(pyridoxal phosphate)lysine is present on Lys-243. Residue Ser-271 coordinates N(2)-acetyl-L-ornithine. Residue Thr-272 coordinates pyridoxal 5'-phosphate.

This sequence belongs to the class-III pyridoxal-phosphate-dependent aminotransferase family. ArgD subfamily. Homodimer. It depends on pyridoxal 5'-phosphate as a cofactor.

The protein localises to the cytoplasm. The catalysed reaction is N(2)-acetyl-L-ornithine + 2-oxoglutarate = N-acetyl-L-glutamate 5-semialdehyde + L-glutamate. It participates in amino-acid biosynthesis; L-arginine biosynthesis; N(2)-acetyl-L-ornithine from L-glutamate: step 4/4. This is Acetylornithine aminotransferase from Rhodobacter capsulatus (strain ATCC BAA-309 / NBRC 16581 / SB1003).